A 447-amino-acid polypeptide reads, in one-letter code: Tubulin beta-2 chain (447 aa).

Gln-9, Glu-67, Ser-136, Gly-140, Thr-141, Gly-142, Asn-202, and Asn-224 together coordinate GTP. Glu-67 is a Mg(2+) binding site. A compositionally biased stretch (polar residues) spans 411 to 425 (SNMNDLVSEYQQYQD). A disordered region spans residues 411–447 (SNMNDLVSEYQQYQDATAEEDEYEEEEEDYHQEHDEM). Residues 427-440 (TAEEDEYEEEEEDY) show a composition bias toward acidic residues.

The protein belongs to the tubulin family. In terms of assembly, dimer of alpha and beta chains. A typical microtubule is a hollow water-filled tube with an outer diameter of 25 nm and an inner diameter of 15 nM. Alpha-beta heterodimers associate head-to-tail to form protofilaments running lengthwise along the microtubule wall with the beta-tubulin subunit facing the microtubule plus end conferring a structural polarity. Microtubules usually have 13 protofilaments but different protofilament numbers can be found in some organisms and specialized cells. Requires Mg(2+) as cofactor.

It is found in the cytoplasm. It localises to the cytoskeleton. In terms of biological role, tubulin is the major constituent of microtubules, a cylinder consisting of laterally associated linear protofilaments composed of alpha- and beta-tubulin heterodimers. Microtubules grow by the addition of GTP-tubulin dimers to the microtubule end, where a stabilizing cap forms. Below the cap, tubulin dimers are in GDP-bound state, owing to GTPase activity of alpha-tubulin. This is Tubulin beta-2 chain (TUBB2) from Pisum sativum (Garden pea).